A 125-amino-acid polypeptide reads, in one-letter code: Homeobox protein HD-8 (125 aa).

The segment at residues 30-89 is a DNA-binding region (homeobox); sequence EPDTRTRKTTFQMMVLKEVFKIAPHPSTLTKADLALMIKLPLKAVQIWFQNERSRKERGG.

The protein resides in the nucleus. The sequence is that of Homeobox protein HD-8 (HD-8) from Encephalitozoon cuniculi (strain GB-M1) (Microsporidian parasite).